The chain runs to 310 residues: RING-H2 finger protein ATL60 (310 aa).

A helical transmembrane segment spans residues 24-44 (VLLFSIVSIFTGILFLLLLHL). The RING-type; atypical zinc finger occupies 120–162 (CAVCLSDLVDGDKARVLPRCNHGFHVDCIDMWFQSHSTCPLCR). Disordered stretches follow at residues 170-201 (DTTH…QDQS) and 240-260 (GNFA…RSQE). Polar residues predominate over residues 179-201 (LPQNQNFESGHSTNQHNPSQDQS).

It belongs to the RING-type zinc finger family. ATL subfamily.

It localises to the membrane. It catalyses the reaction S-ubiquitinyl-[E2 ubiquitin-conjugating enzyme]-L-cysteine + [acceptor protein]-L-lysine = [E2 ubiquitin-conjugating enzyme]-L-cysteine + N(6)-ubiquitinyl-[acceptor protein]-L-lysine.. It functions in the pathway protein modification; protein ubiquitination. This is RING-H2 finger protein ATL60 (ATL60) from Arabidopsis thaliana (Mouse-ear cress).